A 267-amino-acid chain; its full sequence is Kit ligand (267 aa).

The signal sequence occupies residues methionine 1–threonine 25. Glutamine 26 carries the post-translational modification Pyrrolidone carboxylic acid. Over glutamine 26–glutamine 215 the chain is Extracellular. Disulfide bonds link cysteine 29–cysteine 114 and cysteine 68–cysteine 164. Asparagine 90, asparagine 97, asparagine 145, and asparagine 196 each carry an N-linked (GlcNAc...) asparagine glycan. The chain crosses the membrane as a helical span at residues tryptophan 216–tryptophan 238. Over lysine 239–lysine 267 the chain is Cytoplasmic.

The protein belongs to the SCF family. As to quaternary structure, homodimer, non-covalently linked. Heterotetramer with KIT, binding two KIT molecules; thereby mediates KIT dimerization and subsequent activation by autophosphorylation. A soluble form is produced by proteolytic processing of the extracellular domain.

It is found in the cytoplasm. The protein resides in the cytoskeleton. The protein localises to the cell membrane. Its subcellular location is the cell projection. It localises to the lamellipodium. It is found in the filopodium. The protein resides in the secreted. In terms of biological role, ligand for the receptor-type protein-tyrosine kinase KIT. Plays an essential role in the regulation of cell survival and proliferation, hematopoiesis, stem cell maintenance, gametogenesis, mast cell development, migration and function, and in melanogenesis. KITLG/SCF binding can activate several signaling pathways. Promotes phosphorylation of PIK3R1, the regulatory subunit of phosphatidylinositol 3-kinase, and subsequent activation of the kinase AKT1. KITLG/SCF and KIT also transmit signals via GRB2 and activation of RAS, RAF1 and the MAP kinases MAPK1/ERK2 and/or MAPK3/ERK1. KITLG/SCF and KIT promote activation of STAT family members STAT1, STAT3 and STAT5. KITLG/SCF and KIT promote activation of PLCG1, leading to the production of the cellular signaling molecules diacylglycerol and inositol 1,4,5-trisphosphate. KITLG/SCF acts synergistically with other cytokines, probably interleukins. This is Kit ligand (KITLG) from Ovis aries (Sheep).